The sequence spans 669 residues: DNA ligase (669 aa).

Residues 33 to 37, 82 to 83, and Glu115 each bind NAD(+); these read DLTYD and SL. Residue Lys117 is the N6-AMP-lysine intermediate of the active site. Arg138, Glu172, Lys286, and Lys310 together coordinate NAD(+). 4 residues coordinate Zn(2+): Cys401, Cys404, Cys417, and Cys422.

It belongs to the NAD-dependent DNA ligase family. LigA subfamily. It depends on Mg(2+) as a cofactor. The cofactor is Mn(2+).

It carries out the reaction NAD(+) + (deoxyribonucleotide)n-3'-hydroxyl + 5'-phospho-(deoxyribonucleotide)m = (deoxyribonucleotide)n+m + AMP + beta-nicotinamide D-nucleotide.. DNA ligase that catalyzes the formation of phosphodiester linkages between 5'-phosphoryl and 3'-hydroxyl groups in double-stranded DNA using NAD as a coenzyme and as the energy source for the reaction. It is essential for DNA replication and repair of damaged DNA. The sequence is that of DNA ligase from Borrelia hermsii (strain HS1 / DAH).